Here is a 126-residue protein sequence, read N- to C-terminus: Glycine cleavage system H protein (126 aa).

The Lipoyl-binding domain occupies 24 to 106; it reads TVTVGITDHA…YGEGWMYRIK (83 aa). K65 is modified (N6-lipoyllysine).

It belongs to the GcvH family. In terms of assembly, the glycine cleavage system is composed of four proteins: P, T, L and H. (R)-lipoate serves as cofactor.

Functionally, the glycine cleavage system catalyzes the degradation of glycine. The H protein shuttles the methylamine group of glycine from the P protein to the T protein. The chain is Glycine cleavage system H protein from Psychrobacter sp. (strain PRwf-1).